Here is a 308-residue protein sequence, read N- to C-terminus: MLNILGKRYLFFAISLAMIIPGLIVMAIFGLPLSIDFKGGSLLEVEFASKTLPAPAEVVALYNDLGITDAQVTTTGNNTLLVRSSFIDDDVRAKVVQEMNSRFNDTVTVLRFDSVGPTIGKEVAGRATLAVSIAALAVIIYITWAFRGVHNAFRYGVCAIIAMIHDVLVVISLVSIGGVLFGWQVDALFLTALLSVIGFSVQDKVVVFDRIRENSQIYRKLDFEKLANHSIVQTLQRSINTQLMTVEYMLLAIALFGGITLREFAIILLVGLFMGTYSSIFIAAPSLVIWESGEWRNWFKRGAKPASA.

Helical transmembrane passes span 10–30 (LFFAISLAMIIPGLIVMAIFG), 129–149 (LAVSIAALAVIIYITWAFRGV), 160–180 (IIAMIHDVLVVISLVSIGGVL), 181–201 (FGWQVDALFLTALLSVIGFSV), 241–261 (TQLMTVEYMLLAIALFGGITL), and 264–284 (FAIILLVGLFMGTYSSIFIAA).

The protein belongs to the SecD/SecF family. SecF subfamily. As to quaternary structure, forms a complex with SecD. Part of the essential Sec protein translocation apparatus which comprises SecA, SecYEG and auxiliary proteins SecDF. Other proteins may also be involved.

It is found in the cell membrane. In terms of biological role, part of the Sec protein translocase complex. Interacts with the SecYEG preprotein conducting channel. SecDF uses the proton motive force (PMF) to complete protein translocation after the ATP-dependent function of SecA. This Anaerolinea thermophila (strain DSM 14523 / JCM 11388 / NBRC 100420 / UNI-1) protein is Protein translocase subunit SecF.